The chain runs to 120 residues: UPF0715 membrane protein YwlA (120 aa).

4 helical membrane-spanning segments follow: residues tyrosine 3 to isoleucine 23, phenylalanine 26 to alanine 46, leucine 63 to leucine 83, and alanine 95 to leucine 115.

This sequence belongs to the UPF0715 family.

Its subcellular location is the cell membrane. This is UPF0715 membrane protein YwlA (ywlA) from Bacillus subtilis (strain 168).